A 1175-amino-acid chain; its full sequence is Pyruvate carboxylase (1175 aa).

Residues 22-474 (NANKILVANR…WTTFIDDTPS (453 aa)) form the Biotin carboxylation domain. Lys-140, Glu-224, and His-259 together coordinate ATP. The ATP-grasp domain occupies 144–341 (RNLAGKCNVP…IVAAQIQIAA (198 aa)). Arg-316 is a catalytic residue. Residues 561–828 (CLIMDTTWRD…NTGITEQNAR (268 aa)) enclose the Pyruvate carboxyltransferase domain. Substrate-binding positions include 569-573 (RDAHQ) and Arg-642. A divalent metal cation is bound at residue Asp-570. The a divalent metal cation site is built by Lys-738, His-768, and His-770. Lys-738 carries the N6-carboxylysine modification. Substrate is bound at residue Thr-902. The 76-residue stretch at 1099–1174 (KADAHNPNEV…DAGDLICKIT (76 aa)) folds into the Biotinyl-binding domain. Lys-1140 carries the N6-biotinyllysine modification.

The cofactor is biotin. Zn(2+) is required as a cofactor.

The protein resides in the cytoplasm. It catalyses the reaction hydrogencarbonate + pyruvate + ATP = oxaloacetate + ADP + phosphate + H(+). Its pathway is carbohydrate biosynthesis; gluconeogenesis. Pyruvate carboxylase catalyzes a 2-step reaction, involving the ATP-dependent carboxylation of the covalently attached biotin in the first step and the transfer of the carboxyl group to pyruvate in the second. This is Pyruvate carboxylase (PYC) from Pichia angusta (Yeast).